A 100-amino-acid polypeptide reads, in one-letter code: Urease subunit gamma (100 aa).

This sequence belongs to the urease gamma subunit family. In terms of assembly, heterotrimer of UreA (gamma), UreB (beta) and UreC (alpha) subunits. Three heterotrimers associate to form the active enzyme.

It is found in the cytoplasm. The catalysed reaction is urea + 2 H2O + H(+) = hydrogencarbonate + 2 NH4(+). It functions in the pathway nitrogen metabolism; urea degradation; CO(2) and NH(3) from urea (urease route): step 1/1. The polypeptide is Urease subunit gamma (Stutzerimonas stutzeri (strain A1501) (Pseudomonas stutzeri)).